We begin with the raw amino-acid sequence, 113 residues long: Small ribosomal subunit protein eS24 (113 aa).

It belongs to the eukaryotic ribosomal protein eS24 family.

This is Small ribosomal subunit protein eS24 from Metallosphaera sedula (strain ATCC 51363 / DSM 5348 / JCM 9185 / NBRC 15509 / TH2).